The sequence spans 609 residues: Glutamine--fructose-6-phosphate aminotransferase [isomerizing] (609 aa).

Cys2 functions as the Nucleophile; for GATase activity in the catalytic mechanism. The Glutamine amidotransferase type-2 domain occupies Cys2–Arg218. 2 SIS domains span residues Ala286–Leu426 and Leu458–Pro599. Catalysis depends on Lys604, which acts as the For Fru-6P isomerization activity.

In terms of assembly, homodimer. In pull-down experiments interacts with CedA.

It localises to the cytoplasm. The catalysed reaction is D-fructose 6-phosphate + L-glutamine = D-glucosamine 6-phosphate + L-glutamate. In terms of biological role, catalyzes the first step in hexosamine metabolism, converting fructose-6P into glucosamine-6P using glutamine as a nitrogen source. This chain is Glutamine--fructose-6-phosphate aminotransferase [isomerizing] (glmS), found in Escherichia coli (strain K12).